Here is a 327-residue protein sequence, read N- to C-terminus: Biotin synthase (327 aa).

Residues Gln51–Arg278 form the Radical SAM core domain. Residues Cys66, Cys70, and Cys73 each contribute to the [4Fe-4S] cluster site. Positions 110, 141, 201, and 273 each coordinate [2Fe-2S] cluster.

Belongs to the radical SAM superfamily. Biotin synthase family. Homodimer. Requires [4Fe-4S] cluster as cofactor. The cofactor is [2Fe-2S] cluster.

It catalyses the reaction (4R,5S)-dethiobiotin + (sulfur carrier)-SH + 2 reduced [2Fe-2S]-[ferredoxin] + 2 S-adenosyl-L-methionine = (sulfur carrier)-H + biotin + 2 5'-deoxyadenosine + 2 L-methionine + 2 oxidized [2Fe-2S]-[ferredoxin]. Its pathway is cofactor biosynthesis; biotin biosynthesis; biotin from 7,8-diaminononanoate: step 2/2. Functionally, catalyzes the conversion of dethiobiotin (DTB) to biotin by the insertion of a sulfur atom into dethiobiotin via a radical-based mechanism. The polypeptide is Biotin synthase (Histophilus somni (strain 2336) (Haemophilus somnus)).